Here is a 481-residue protein sequence, read N- to C-terminus: ATP synthase subunit beta, chloroplastic (481 aa).

ATP is bound at residue 162–169 (GGAGVGKT).

It belongs to the ATPase alpha/beta chains family. As to quaternary structure, F-type ATPases have 2 components, CF(1) - the catalytic core - and CF(0) - the membrane proton channel. CF(1) has five subunits: alpha(3), beta(3), gamma(1), delta(1), epsilon(1). CF(0) has four main subunits: a(1), b(1), b'(1) and c(9-12).

Its subcellular location is the plastid. It is found in the chloroplast thylakoid membrane. The catalysed reaction is ATP + H2O + 4 H(+)(in) = ADP + phosphate + 5 H(+)(out). Produces ATP from ADP in the presence of a proton gradient across the membrane. The catalytic sites are hosted primarily by the beta subunits. In Chlorella vulgaris (Green alga), this protein is ATP synthase subunit beta, chloroplastic.